The chain runs to 556 residues: MQFDYIIIGAGSAGNVLATRLTEDPNTTVLLLEAGGPDYRFDFRTQMPAALAFPLQGKRYNWAYETEPEPFMNNRRMECGRGKGLGGSSLINGMCYIRGNALDLDNWAQEPGLENWSYLDCLPYYRKAETRDVGENDYHGGDGPVSVITSKPGVNPLFEAMIEAGMQAGYPRTDDLNGYQQEGFGPMDRTVTPHGRRASTARGYLDQAKSRPNLTIRTHAMTDHIIFDGKRAVGVEWLEGDSTIPTRAAANKEVLLCAGAIASPQILQRSGVGNAELLAEFDIPLVHELPGVGENLQDHLEMYLQYECKEPVSLYPALQWWNQPRIGAEWLFGGTGVGASNHFEAGGFIRSREEFAWPNIQYHFLPVAINYNGSNAVKEHGFQCHVGSMRSPSRGHVRIKSRDPHQHPAILFNYMSHEQDWQEFRDAIRTTREIMHQPALDQYRGREISPGVECQTDEQLDEFVRNHAETAFHPCGTCKMGYDEMAVVDGEGRVHGLEGLRVVDASIMPQIITGNLNATTIMIGEKIADMIRGKEALPRSTAGYFVANGMPVRAKK.

4-33 (DYIIIGAGSAGNVLATRLTEDPNTTVLLLE) contacts FAD. H473 serves as the catalytic Proton acceptor.

The protein belongs to the GMC oxidoreductase family. The cofactor is FAD.

The enzyme catalyses choline + A = betaine aldehyde + AH2. It carries out the reaction betaine aldehyde + NAD(+) + H2O = glycine betaine + NADH + 2 H(+). It functions in the pathway amine and polyamine biosynthesis; betaine biosynthesis via choline pathway; betaine aldehyde from choline (cytochrome c reductase route): step 1/1. Functionally, involved in the biosynthesis of the osmoprotectant glycine betaine. Catalyzes the oxidation of choline to betaine aldehyde and betaine aldehyde to glycine betaine at the same rate. This chain is Oxygen-dependent choline dehydrogenase, found in Escherichia coli O127:H6 (strain E2348/69 / EPEC).